Here is a 378-residue protein sequence, read N- to C-terminus: Aminomethyltransferase (378 aa).

It belongs to the GcvT family. In terms of assembly, the glycine cleavage system is composed of four proteins: P, T, L and H.

It catalyses the reaction N(6)-[(R)-S(8)-aminomethyldihydrolipoyl]-L-lysyl-[protein] + (6S)-5,6,7,8-tetrahydrofolate = N(6)-[(R)-dihydrolipoyl]-L-lysyl-[protein] + (6R)-5,10-methylene-5,6,7,8-tetrahydrofolate + NH4(+). Functionally, the glycine cleavage system catalyzes the degradation of glycine. The protein is Aminomethyltransferase of Acidobacterium capsulatum (strain ATCC 51196 / DSM 11244 / BCRC 80197 / JCM 7670 / NBRC 15755 / NCIMB 13165 / 161).